We begin with the raw amino-acid sequence, 241 residues long: Carboxy-S-adenosyl-L-methionine synthase (241 aa).

Residues Tyr38, 63-65, 88-89, 116-117, Asn131, and Arg198 contribute to the S-adenosyl-L-methionine site; these read GCS, DN, and DI.

Belongs to the class I-like SAM-binding methyltransferase superfamily. Cx-SAM synthase family. In terms of assembly, homodimer.

It carries out the reaction prephenate + S-adenosyl-L-methionine = carboxy-S-adenosyl-L-methionine + 3-phenylpyruvate + H2O. Catalyzes the conversion of S-adenosyl-L-methionine (SAM) to carboxy-S-adenosyl-L-methionine (Cx-SAM). The chain is Carboxy-S-adenosyl-L-methionine synthase from Glaesserella parasuis serovar 5 (strain SH0165) (Haemophilus parasuis).